Consider the following 261-residue polypeptide: Cytochrome c oxidase subunit 3 (261 aa).

Over methionine 1–proline 15 the chain is Mitochondrial matrix. The chain crosses the membrane as a helical span at residues tryptophan 16 to tryptophan 34. The Mitochondrial intermembrane segment spans residues phenylalanine 35–methionine 40. A helical membrane pass occupies residues threonine 41–threonine 66. Residues phenylalanine 67 to threonine 72 lie on the Mitochondrial matrix side of the membrane. The chain crosses the membrane as a helical span at residues proline 73–serine 105. The Mitochondrial intermembrane portion of the chain corresponds to leucine 106–glutamate 128. A helical membrane pass occupies residues valine 129–methionine 152. Residues glutamate 153–glutamate 155 lie on the Mitochondrial matrix side of the membrane. A helical membrane pass occupies residues arginine 156–glutamate 183. Residues alanine 184–aspartate 190 lie on the Mitochondrial intermembrane side of the membrane. The chain crosses the membrane as a helical span at residues glycine 191–valine 223. Over leucine 224–histidine 232 the chain is Mitochondrial matrix. Residues phenylalanine 233–isoleucine 256 form a helical membrane-spanning segment. Residues tyrosine 257–serine 261 are Mitochondrial intermembrane-facing.

Belongs to the cytochrome c oxidase subunit 3 family. In terms of assembly, component of the cytochrome c oxidase (complex IV, CIV), a multisubunit enzyme composed of 14 subunits. The complex is composed of a catalytic core of 3 subunits MT-CO1, MT-CO2 and MT-CO3, encoded in the mitochondrial DNA, and 11 supernumerary subunits COX4I, COX5A, COX5B, COX6A, COX6B, COX6C, COX7A, COX7B, COX7C, COX8 and NDUFA4, which are encoded in the nuclear genome. The complex exists as a monomer or a dimer and forms supercomplexes (SCs) in the inner mitochondrial membrane with NADH-ubiquinone oxidoreductase (complex I, CI) and ubiquinol-cytochrome c oxidoreductase (cytochrome b-c1 complex, complex III, CIII), resulting in different assemblies (supercomplex SCI(1)III(2)IV(1) and megacomplex MCI(2)III(2)IV(2)).

It is found in the mitochondrion inner membrane. It carries out the reaction 4 Fe(II)-[cytochrome c] + O2 + 8 H(+)(in) = 4 Fe(III)-[cytochrome c] + 2 H2O + 4 H(+)(out). In terms of biological role, component of the cytochrome c oxidase, the last enzyme in the mitochondrial electron transport chain which drives oxidative phosphorylation. The respiratory chain contains 3 multisubunit complexes succinate dehydrogenase (complex II, CII), ubiquinol-cytochrome c oxidoreductase (cytochrome b-c1 complex, complex III, CIII) and cytochrome c oxidase (complex IV, CIV), that cooperate to transfer electrons derived from NADH and succinate to molecular oxygen, creating an electrochemical gradient over the inner membrane that drives transmembrane transport and the ATP synthase. Cytochrome c oxidase is the component of the respiratory chain that catalyzes the reduction of oxygen to water. Electrons originating from reduced cytochrome c in the intermembrane space (IMS) are transferred via the dinuclear copper A center (CU(A)) of subunit 2 and heme A of subunit 1 to the active site in subunit 1, a binuclear center (BNC) formed by heme A3 and copper B (CU(B)). The BNC reduces molecular oxygen to 2 water molecules using 4 electrons from cytochrome c in the IMS and 4 protons from the mitochondrial matrix. The chain is Cytochrome c oxidase subunit 3 (mt-co3) from Danio rerio (Zebrafish).